Consider the following 450-residue polypeptide: 23S rRNA (uracil(1939)-C(5))-methyltransferase RlmD (450 aa).

The TRAM domain maps to 12–70 (SKQLSAKLSLSVNQLDHLGAGIAQHQGKVVFIPGALPDETVTVQFTEQKKNYARAKLIK). Positions 83, 89, 92, and 171 each coordinate [4Fe-4S] cluster. S-adenosyl-L-methionine contacts are provided by Gln283, Phe312, Asn317, Glu333, Asp360, and Asp380. Residue Cys406 is the Nucleophile of the active site.

The protein belongs to the class I-like SAM-binding methyltransferase superfamily. RNA M5U methyltransferase family. RlmD subfamily.

It carries out the reaction uridine(1939) in 23S rRNA + S-adenosyl-L-methionine = 5-methyluridine(1939) in 23S rRNA + S-adenosyl-L-homocysteine + H(+). In terms of biological role, catalyzes the formation of 5-methyl-uridine at position 1939 (m5U1939) in 23S rRNA. This is 23S rRNA (uracil(1939)-C(5))-methyltransferase RlmD from Shewanella baltica (strain OS155 / ATCC BAA-1091).